Here is a 170-residue protein sequence, read N- to C-terminus: Small ribosomal subunit protein bS18c (170 aa).

Disordered stretches follow at residues 1 to 59 (MYIS…IGPG) and 151 to 170 (NLRNSNQNLRNNNRNLSSDC). 7 repeats span residues 4–10 (SKQPFRK), 11–17 (SKQPFRK), 18–24 (SKQTFHK), 25–31 (SKQPFRK), 32–38 (FKQPFRK), 39–45 (SKQPFRK), and 46–52 (SKQPFRR). Residues 4 to 52 (SKQPFRKSKQPFRKSKQTFHKSKQPFRKFKQPFRKSKQPFRKSKQPFRR) are 7 X 7 AA tandem repeats. Residues 7–55 (PFRKSKQPFRKSKQTFHKSKQPFRKFKQPFRKSKQPFRKSKQPFRRRSR) show a composition bias toward basic residues.

This sequence belongs to the bacterial ribosomal protein bS18 family. As to quaternary structure, part of the 30S ribosomal subunit.

The protein resides in the plastid. It localises to the chloroplast. The polypeptide is Small ribosomal subunit protein bS18c (rps18) (Zea mays (Maize)).